The following is a 501-amino-acid chain: Pre-mRNA-splicing factor 38B (501 aa).

The span at methionine 1–glutamine 11 shows a compositional bias: low complexity. Disordered stretches follow at residues methionine 1–tryptophan 28 and aspartate 208–proline 501. Residues glycine 243–arginine 273 are compositionally biased toward basic residues. A coiled-coil region spans residues glutamate 281 to arginine 302. Over residues glutamate 281–arginine 328 the composition is skewed to basic and acidic residues. Residues arginine 329–serine 341 show a composition bias toward basic residues. Basic and acidic residues predominate over residues threonine 342–arginine 408. Residues serine 409 to serine 435 are compositionally biased toward basic residues. Basic and acidic residues predominate over residues serine 437 to arginine 447. Residues lysine 448–serine 468 show a composition bias toward basic residues. Positions histidine 469–glutamate 491 are enriched in basic and acidic residues. Polar residues predominate over residues arginine 492–proline 501.

This sequence belongs to the PRP38 family.

It localises to the nucleus. Its function is as follows. May be required for pre-mRNA splicing. The chain is Pre-mRNA-splicing factor 38B (prpf38b) from Danio rerio (Zebrafish).